An 82-amino-acid polypeptide reads, in one-letter code: Penaeidin-3f (82 aa).

Positions 1-19 are cleaved as a signal peptide; the sequence is MRLVACLVFLASFALVCQG. Gln20 is subject to Pyrrolidone carboxylic acid. 3 cysteine pairs are disulfide-bonded: Cys51–Cys66, Cys55–Cys73, and Cys67–Cys74. Residue Ser81 is modified to Serine amide.

It belongs to the penaeidin family.

The protein resides in the cytoplasmic granule. Its function is as follows. Antibacterial and antifungal activity. Presents chitin-binding activity. The chain is Penaeidin-3f from Penaeus vannamei (Whiteleg shrimp).